Reading from the N-terminus, the 772-residue chain is E3 ubiquitin-protein ligase UHRF1 (772 aa).

In terms of domain architecture, Ubiquitin-like spans 1–77; it reads MWIQVRTMDG…IVQLLVRQIP (77 aa). Residues 90–111 form a disordered region; it reads SDASAGCGSGQRDSDSGSGEGA. Tudor-like regions lie at residues 129–205 and 212–281; these read SLYK…LRAR and EIKV…IEEP. The linker stretch occupies residues 291-299; sequence PQKRQNGPE. The PHD-type zinc finger occupies 297–364; that stretch reads GPECKHCKDN…DWYCPDCRND (68 aa). Histone H3R2me0 binding stretches follow at residues 331–335 and 351–353; these read CDECD and PQD. The YDG domain occupies 417 to 580; it reads GPIPGVPVGT…FLVWRYLLRR (164 aa). The tract at residues 443–444 is required to promote base flipping; sequence HV. DNA is bound by residues 461–462 and D467; that span reads AG. 2 required for formation of a 5-methylcytosine-binding pocket regions span residues 464 to 467 and 476 to 479; these read YEDD and YTGS. Residues 615–626 show a composition bias toward basic and acidic residues; it reads SKEREKENKTED. Residues 615-649 are disordered; it reads SKEREKENKTEDEPIDSPSKGKRKRNSDNEQTAAK. The RING-type zinc finger occupies 703–742; that stretch reads CICCQEVVYEPVTTECHHNICKGCLDRSFKALVHSCPACR.

It localises to the nucleus. It carries out the reaction S-ubiquitinyl-[E2 ubiquitin-conjugating enzyme]-L-cysteine + [acceptor protein]-L-lysine = [E2 ubiquitin-conjugating enzyme]-L-cysteine + N(6)-ubiquitinyl-[acceptor protein]-L-lysine.. It participates in protein modification; protein ubiquitination. Multidomain protein that acts as a key epigenetic regulator by bridging DNA methylation and chromatin modification. Specifically recognizes and binds hemimethylated DNA at replication forks via its YDG domain and recruits dnmt1 methyltransferase to ensure faithful propagation of the DNA methylation patterns through DNA replication. In addition to its role in maintenance of DNA methylation, also plays a key role in chromatin modification: through its tudor-like regions and PHD-type zinc fingers, specifically recognizes and binds histone H3 trimethylated at 'Lys-9' (H3K9me3) and unmethylated at 'Arg-2' (H3R2me0), respectively, and recruits chromatin proteins. Enriched in pericentric heterochromatin where it recruits different chromatin modifiers required for this chromatin replication. Also localizes to euchromatic regions where it negatively regulates transcription possibly by impacting DNA methylation and histone modifications. Has E3 ubiquitin-protein ligase activity by mediating the ubiquitination of target proteins. However, it is still unclear how E3 ubiquitin-protein ligase activity is related to its role in chromatin in vivo. The protein is E3 ubiquitin-protein ligase UHRF1 (uhrf1) of Xenopus laevis (African clawed frog).